We begin with the raw amino-acid sequence, 236 residues long: Proteasome subunit beta type-1 (236 aa).

Belongs to the peptidase T1B family. In terms of assembly, the 26S proteasome consists of a 20S proteasome core and two 19S regulatory subunits. The 20S proteasome core is composed of 28 subunits that are arranged in four stacked rings, resulting in a barrel-shaped structure. The two end rings are each formed by seven alpha subunits, and the two central rings are each formed by seven beta subunits. The catalytic chamber with the active sites is on the inside of the barrel.

The protein localises to the cytoplasm. The protein resides in the nucleus. Non-catalytic component of the proteasome, a multicatalytic proteinase complex which is characterized by its ability to cleave peptides with Arg, Phe, Tyr, Leu, and Glu adjacent to the leaving group at neutral or slightly basic pH. The proteasome has an ATP-dependent proteolytic activity. This chain is Proteasome subunit beta type-1 (psmB1), found in Dictyostelium discoideum (Social amoeba).